A 123-amino-acid chain; its full sequence is WAP four-disulfide core domain protein 5 (123 aa).

A signal peptide spans 1 to 24; sequence MRFGRLLLLAVLLAGVSQLPAVSG. 2 WAP domains span residues 27–74 and 75–121; these read KGEK…IPRV and SVKL…RDPV. 8 cysteine pairs are disulfide-bonded: Cys-34-Cys-62, Cys-41-Cys-66, Cys-49-Cys-61, Cys-55-Cys-70, Cys-81-Cys-109, Cys-88-Cys-113, Cys-96-Cys-108, and Cys-102-Cys-117.

Its subcellular location is the secreted. Putative acid-stable proteinase inhibitor. This chain is WAP four-disulfide core domain protein 5 (WFDC5), found in Otolemur garnettii (Small-eared galago).